A 95-amino-acid chain; its full sequence is Small ubiquitin-related modifier 2 (95 aa).

Residue lysine 11 forms a Glycyl lysine isopeptide (Lys-Gly) (interchain with G-Cter in SUMO) linkage. Residues aspartate 16–phenylalanine 95 form the Ubiquitin-like domain. Glycine 93 is covalently cross-linked (Glycyl lysine isopeptide (Gly-Lys) (interchain with K-? in acceptor proteins)). The propeptide occupies serine 94–phenylalanine 95.

It belongs to the ubiquitin family. SUMO subfamily. As to quaternary structure, interacts with sae2 and ube2i. Covalently attached to a number of proteins, including top2. Polymeric chains can be formed through Lys-11 cross-linking. In terms of processing, cleavage of precursor form by a sentrin-specific protease is necessary for function.

The protein localises to the nucleus. In terms of biological role, ubiquitin-like protein that can be covalently attached to proteins as a monomer or as a lysine-linked polymer. Covalent attachment via an isopeptide bond to its substrates requires prior activation by the E1 complex sae1-sae2 and linkage to the E2 enzyme ube2i, and can be promoted by an E3 ligase such as pias1-4. This post-translational modification on lysine residues of proteins plays a crucial role in a number of cellular processes such as nuclear transport, DNA replication and repair, mitosis and signal transduction. Polymeric sumo2 chains are also susceptible to polyubiquitination which functions as a signal for proteasomal degradation of modified proteins. This chain is Small ubiquitin-related modifier 2 (sumo2), found in Xenopus tropicalis (Western clawed frog).